The following is a 162-amino-acid chain: Cyanate hydratase (162 aa).

Catalysis depends on residues Arg102, Glu105, and Ser128.

This sequence belongs to the cyanase family.

It catalyses the reaction cyanate + hydrogencarbonate + 3 H(+) = NH4(+) + 2 CO2. Catalyzes the reaction of cyanate with bicarbonate to produce ammonia and carbon dioxide. The polypeptide is Cyanate hydratase (Mycosarcoma maydis (Corn smut fungus)).